We begin with the raw amino-acid sequence, 236 residues long: tRNA (guanine-N(7)-)-methyltransferase (236 aa).

Positions 35, 60, 87, and 113 each coordinate S-adenosyl-L-methionine. D113 is a catalytic residue. Residues K117 and D149 each coordinate substrate.

This sequence belongs to the class I-like SAM-binding methyltransferase superfamily. TrmB family.

The enzyme catalyses guanosine(46) in tRNA + S-adenosyl-L-methionine = N(7)-methylguanosine(46) in tRNA + S-adenosyl-L-homocysteine. The protein operates within tRNA modification; N(7)-methylguanine-tRNA biosynthesis. In terms of biological role, catalyzes the formation of N(7)-methylguanine at position 46 (m7G46) in tRNA. This Prochlorococcus marinus (strain MIT 9303) protein is tRNA (guanine-N(7)-)-methyltransferase.